We begin with the raw amino-acid sequence, 182 residues long: Ribosome maturation factor RimM (182 aa).

Positions 101–174 (QDEYFIHQLY…QIVVRLLPGL (74 aa)) constitute a PRC barrel domain.

This sequence belongs to the RimM family. As to quaternary structure, binds ribosomal protein uS19.

It is found in the cytoplasm. In terms of biological role, an accessory protein needed during the final step in the assembly of 30S ribosomal subunit, possibly for assembly of the head region. Essential for efficient processing of 16S rRNA. May be needed both before and after RbfA during the maturation of 16S rRNA. It has affinity for free ribosomal 30S subunits but not for 70S ribosomes. The chain is Ribosome maturation factor RimM from Roseiflexus sp. (strain RS-1).